We begin with the raw amino-acid sequence, 411 residues long: Putative competence-damage inducible protein (411 aa).

This sequence belongs to the CinA family.

This chain is Putative competence-damage inducible protein, found in Clostridium acetobutylicum (strain ATCC 824 / DSM 792 / JCM 1419 / IAM 19013 / LMG 5710 / NBRC 13948 / NRRL B-527 / VKM B-1787 / 2291 / W).